Here is a 172-residue protein sequence, read N- to C-terminus: uncharacterized protein (172 aa).

Residues 1-28 (MAAAGVTAKAGGGTSAAAASLIRARSPA) are compositionally biased toward low complexity. Positions 1 to 172 (MAAAGVTAKA…GGRRSGRDAG (172 aa)) are disordered. A compositionally biased stretch (basic residues) spans 58–68 (PRRRSRARRGH). Over residues 80–100 (TVGGEGQASQIGGGGGGGGGR) the composition is skewed to gly residues. Low complexity predominate over residues 129–138 (PGLASSPGVA). The span at 139–165 (PAGGSGGLWSGAGLCSGLGARGFPGGR) shows a compositional bias: gly residues.

This is an uncharacterized protein from Homo sapiens (Human).